A 328-amino-acid polypeptide reads, in one-letter code: Beta-ketoacyl-[acyl-carrier-protein] synthase III 2 (328 aa).

Active-site residues include cysteine 113 and histidine 255. Positions glutamine 256–arginine 260 are ACP-binding. Asparagine 285 is a catalytic residue.

It belongs to the thiolase-like superfamily. FabH family. As to quaternary structure, homodimer.

The protein resides in the cytoplasm. It carries out the reaction malonyl-[ACP] + acetyl-CoA + H(+) = 3-oxobutanoyl-[ACP] + CO2 + CoA. It functions in the pathway lipid metabolism; fatty acid biosynthesis. In terms of biological role, catalyzes the condensation reaction of fatty acid synthesis by the addition to an acyl acceptor of two carbons from malonyl-ACP. Catalyzes the first condensation reaction which initiates fatty acid synthesis and may therefore play a role in governing the total rate of fatty acid production. Possesses both acetoacetyl-ACP synthase and acetyl transacylase activities. Its substrate specificity determines the biosynthesis of branched-chain and/or straight-chain of fatty acids. In Lactiplantibacillus plantarum (strain ATCC BAA-793 / NCIMB 8826 / WCFS1) (Lactobacillus plantarum), this protein is Beta-ketoacyl-[acyl-carrier-protein] synthase III 2.